Here is an 84-residue protein sequence, read N- to C-terminus: Dolichol phosphate-mannose biosynthesis regulatory protein (84 aa).

The next 2 helical transmembrane spans lie at 11-31 and 49-69; these read LGLV…VILL and YAVA…GLFI.

It belongs to the DPM2 family. In terms of assembly, component of the dolichol-phosphate mannose (DPM) synthase complex composed of DPM1, DPM2 and DPM3; in the complex interacts directly with DPM3. Component of the glycosylphosphatidylinositol-N-acetylglucosaminyltransferase (GPI-GnT) complex composed at least by PIGA, PIGC, PIGH, PIGP, PIGQ, PIGY and DPM2. Interacts with PIGA, PIGC and PIGQ.

The protein resides in the endoplasmic reticulum membrane. It participates in protein modification; protein glycosylation. Regulates the biosynthesis of dolichol phosphate-mannose. Regulatory subunit of the dolichol-phosphate mannose (DPM) synthase complex; essential for the ER localization and stable expression of DPM1. Part of the glycosylphosphatidylinositol-N-acetylglucosaminyltransferase (GPI-GnT) complex that catalyzes the transfer of N-acetylglucosamine from UDP-N-acetylglucosamine to phosphatidylinositol and participates in the first step of GPI biosynthesis. May act by regulating the GPI-GNT complex. This is Dolichol phosphate-mannose biosynthesis regulatory protein from Homo sapiens (Human).